The primary structure comprises 183 residues: Outer membrane protein H.8 (183 aa).

Positions 1-17 (MKAYLALISAAVIGLAA) are cleaved as a signal peptide. Cys-18 carries N-palmitoyl cysteine lipidation. Residue Cys-18 is the site of S-diacylglycerol cysteine attachment. A disordered region spans residues 27-51 (AEATPAAEAPASEAPAAEAAPADAA). Residues 57 to 183 (GNCAATVESN…LMNGKVTLVD (127 aa)) enclose the Plastocyanin-like domain. Positions 102, 166, 171, and 175 each coordinate Cu cation.

Cu cation is required as a cofactor.

Its subcellular location is the cell outer membrane. This chain is Outer membrane protein H.8, found in Neisseria meningitidis serogroup C / serotype 2a (strain ATCC 700532 / DSM 15464 / FAM18).